The primary structure comprises 357 residues: 5-hydroxytryptamine receptor 5A (357 aa).

The Extracellular segment spans residues 1–36 (MDLPVNLTSFSLSTPSPLETNHSLGKDDLRPSSPLL). N-linked (GlcNAc...) asparagine glycosylation is found at Asn-6 and Asn-21. A helical transmembrane segment spans residues 37 to 63 (SVFGVLILTLLGFLVAATFAWNLLVLA). At 64-76 (TILRVRTFHRVPH) the chain is on the cytoplasmic side. Residues 77-103 (NLVASMAVSDVLVAALVMPLSLVHELS) form a helical membrane-spanning segment. Residues 104–114 (GRRWQLGRRLC) are Extracellular-facing. Cys-114 and Cys-192 are joined by a disulfide. The helical transmembrane segment at 115 to 137 (QLWIACDVLCCTASIWNVTAIAL) threads the bilayer. Asp-121 provides a ligand contact to serotonin. The Cytoplasmic portion of the chain corresponds to 138 to 155 (DRYWSITRHMEYTLRTRK). The chain crosses the membrane as a helical span at residues 156 to 176 (CVSNVMIALTWALSAVISLAP). At 177–198 (LLFGWGETYSEGSEECQVSREP) the chain is on the extracellular side. The chain crosses the membrane as a helical span at residues 199-220 (SYAVFSTVGAFYLPLCVVLFVY). Topologically, residues 221–287 (WKIYKAAKFR…QKEQRAALMV (67 aa)) are cytoplasmic. A helical transmembrane segment spans residues 288 to 312 (GILIGVFVLCWIPFFLTELISPLCS). Over 313 to 314 (CD) the chain is Extracellular. A helical transmembrane segment spans residues 315-339 (IPAIWKSIFLWLGYSNSFFNPLIYT). Residues 340–357 (AFNKNYNSAFKNFFSRQH) lie on the Cytoplasmic side of the membrane.

This sequence belongs to the G-protein coupled receptor 1 family.

The protein localises to the cell membrane. Its function is as follows. G-protein coupled receptor for 5-hydroxytryptamine (serotonin), a biogenic hormone that functions as a neurotransmitter, a hormone and a mitogen. Also functions as a receptor for ergot alkaloid derivatives and other psychoactive substances. Ligand binding causes a conformation change that triggers signaling via guanine nucleotide-binding proteins (G proteins) and modulates the activity of downstream effectors. HTR5A is coupled to G(i)/G(o) G alpha proteins and mediates inhibitory neurotransmission: signaling inhibits adenylate cyclase activity and activates a phosphatidylinositol-calcium second messenger system that regulates the release of Ca(2+) ions from intracellular stores. This Homo sapiens (Human) protein is 5-hydroxytryptamine receptor 5A.